The sequence spans 132 residues: Agouti-signaling protein (132 aa).

The N-terminal stretch at 1–22 is a signal peptide; sequence MDVTRLLLATLLVFLCFFTAYS. Asn39 carries N-linked (GlcNAc...) asparagine glycosylation. The segment covering 61 to 79 has biased composition (basic and acidic residues); it reads EISRKEAEKKRSSKKEASM. Residues 61–87 are disordered; that stretch reads EISRKEAEKKRSSKKEASMKKVARPRT. 5 disulfide bridges follow: Cys93–Cys108, Cys100–Cys114, Cys107–Cys125, Cys111–Cys132, and Cys116–Cys123. In terms of domain architecture, Agouti spans 93–132; that stretch reads CVATRDSCKPPAPACCDPCASCQCRFFRSACSCRVLSLNC.

It localises to the secreted. Involved in the regulation of melanogenesis. The binding of ASP to MC1R precludes alpha-MSH initiated signaling and thus blocks production of cAMP, leading to a down-regulation of eumelanogenesis (brown/black pigment) and thus increasing synthesis of pheomelanin (yellow/red pigment). The polypeptide is Agouti-signaling protein (ASIP) (Macaca fascicularis (Crab-eating macaque)).